An 830-amino-acid polypeptide reads, in one-letter code: Probable glucan 1,3-beta-glucosidase D (830 aa).

Composition is skewed to basic and acidic residues over residues 1–11 and 74–84; these read MPGHSRSRDRL and VHEHDHDHEYD. Disordered stretches follow at residues 1–91, 127–163, and 260–297; these read MPGH…EEPW, MSGA…QRRK, and GGPG…STSA. Over 1 to 307 the chain is Cytoplasmic; the sequence is MPGHSRSRDR…RPSFWKRYHK (307 aa). A compositionally biased stretch (basic residues) spans 147–163; it reads GKGKKRLDRETRRQRRK. Residues 308-328 form a helical; Signal-anchor for type II membrane protein membrane-spanning segment; it reads TFIFFAILIVLAAIAIPVGII. At 329–830 the chain is on the extracellular side; sequence EARRLHGTSG…PSFGNLPEYY (502 aa). Residues Asn-341, Asn-376, Asn-381, Asn-393, Asn-397, Asn-546, and Asn-558 are each glycosylated (N-linked (GlcNAc...) asparagine). Catalysis depends on Glu-597, which acts as the Proton donor. Asn-610, Asn-669, and Asn-689 each carry an N-linked (GlcNAc...) asparagine glycan. The active-site Nucleophile is the Glu-702.

This sequence belongs to the glycosyl hydrolase 5 (cellulase A) family.

The protein localises to the cell membrane. The catalysed reaction is Successive hydrolysis of beta-D-glucose units from the non-reducing ends of (1-&gt;3)-beta-D-glucans, releasing alpha-glucose.. Its function is as follows. Glucosidase involved in the degradation of cellulosic biomass. Active on lichenan. The chain is Probable glucan 1,3-beta-glucosidase D (exgD) from Aspergillus niger (strain ATCC MYA-4892 / CBS 513.88 / FGSC A1513).